A 354-amino-acid chain; its full sequence is Uroporphyrinogen decarboxylase (354 aa).

Residues 27–31 (RQAGR), D77, Y154, T209, and H327 each bind substrate.

It belongs to the uroporphyrinogen decarboxylase family. As to quaternary structure, homodimer.

It is found in the cytoplasm. It carries out the reaction uroporphyrinogen III + 4 H(+) = coproporphyrinogen III + 4 CO2. The protein operates within porphyrin-containing compound metabolism; protoporphyrin-IX biosynthesis; coproporphyrinogen-III from 5-aminolevulinate: step 4/4. Its function is as follows. Catalyzes the decarboxylation of four acetate groups of uroporphyrinogen-III to yield coproporphyrinogen-III. The sequence is that of Uroporphyrinogen decarboxylase from Histophilus somni (strain 2336) (Haemophilus somnus).